We begin with the raw amino-acid sequence, 105 residues long: BLOC-1-related complex subunit 7 (105 aa).

This sequence belongs to the BORCS7 family. As to quaternary structure, component of the BLOC-one-related complex (BORC) which is composed of BLOC1S1, BLOC1S2, BORCS5, BORCS6, BORCS7, BORCS8, KXD1 and SNAPIN.

It is found in the lysosome membrane. As part of the BORC complex may play a role in lysosomes movement and localization at the cell periphery. Associated with the cytosolic face of lysosomes, the BORC complex may recruit ARL8B and couple lysosomes to microtubule plus-end-directed kinesin motor. The protein is BLOC-1-related complex subunit 7 of Bos taurus (Bovine).